A 63-amino-acid polypeptide reads, in one-letter code: Cytochrome c oxidase subunit 7C, mitochondrial (63 aa).

The transit peptide at 1–16 (MLGQSIRRFTTSVVRR) directs the protein to the mitochondrion. At 17-34 (SHYEEGPGKNLPFSVENK) the chain is on the mitochondrial matrix side. At Lys25 the chain carries N6-acetyllysine; alternate. Residue Lys25 is modified to N6-succinyllysine; alternate. The chain crosses the membrane as a helical span at residues 35-57 (WRLLAMMTVYFGSGFAAPFFIVR). At 58–63 (HQLLKK) the chain is on the mitochondrial intermembrane side.

It belongs to the cytochrome c oxidase VIIc family. Component of the cytochrome c oxidase (complex IV, CIV), a multisubunit enzyme composed of 14 subunits. The complex is composed of a catalytic core of 3 subunits MT-CO1, MT-CO2 and MT-CO3, encoded in the mitochondrial DNA, and 11 supernumerary subunits COX4I, COX5A, COX5B, COX6A, COX6B, COX6C, COX7A, COX7B, COX7C, COX8 and NDUFA4, which are encoded in the nuclear genome. The complex exists as a monomer or a dimer and forms supercomplexes (SCs) in the inner mitochondrial membrane with NADH-ubiquinone oxidoreductase (complex I, CI) and ubiquinol-cytochrome c oxidoreductase (cytochrome b-c1 complex, complex III, CIII), resulting in different assemblies (supercomplex SCI(1)III(2)IV(1) and megacomplex MCI(2)III(2)IV(2)). Interacts with RAB5IF.

The protein localises to the mitochondrion inner membrane. Its pathway is energy metabolism; oxidative phosphorylation. In terms of biological role, component of the cytochrome c oxidase, the last enzyme in the mitochondrial electron transport chain which drives oxidative phosphorylation. The respiratory chain contains 3 multisubunit complexes succinate dehydrogenase (complex II, CII), ubiquinol-cytochrome c oxidoreductase (cytochrome b-c1 complex, complex III, CIII) and cytochrome c oxidase (complex IV, CIV), that cooperate to transfer electrons derived from NADH and succinate to molecular oxygen, creating an electrochemical gradient over the inner membrane that drives transmembrane transport and the ATP synthase. Cytochrome c oxidase is the component of the respiratory chain that catalyzes the reduction of oxygen to water. Electrons originating from reduced cytochrome c in the intermembrane space (IMS) are transferred via the dinuclear copper A center (CU(A)) of subunit 2 and heme A of subunit 1 to the active site in subunit 1, a binuclear center (BNC) formed by heme A3 and copper B (CU(B)). The BNC reduces molecular oxygen to 2 water molecules using 4 electrons from cytochrome c in the IMS and 4 protons from the mitochondrial matrix. This Mus musculus (Mouse) protein is Cytochrome c oxidase subunit 7C, mitochondrial (Cox7c).